A 214-amino-acid polypeptide reads, in one-letter code: Pyridoxine/pyridoxamine 5'-phosphate oxidase (214 aa).

Substrate contacts are provided by residues 8–11 (RINY) and Lys-66. FMN-binding positions include 61 to 66 (RIVLIK), 76 to 77 (FT), Arg-82, Lys-83, and Gln-105. Substrate contacts are provided by Tyr-123, Arg-127, and Ser-131. FMN is bound by residues 140-141 (QS) and Trp-184. Residue 190-192 (RLH) participates in substrate binding. Residue Arg-194 coordinates FMN.

The protein belongs to the pyridoxamine 5'-phosphate oxidase family. As to quaternary structure, homodimer. The cofactor is FMN.

It catalyses the reaction pyridoxamine 5'-phosphate + O2 + H2O = pyridoxal 5'-phosphate + H2O2 + NH4(+). The catalysed reaction is pyridoxine 5'-phosphate + O2 = pyridoxal 5'-phosphate + H2O2. It participates in cofactor metabolism; pyridoxal 5'-phosphate salvage; pyridoxal 5'-phosphate from pyridoxamine 5'-phosphate: step 1/1. Its pathway is cofactor metabolism; pyridoxal 5'-phosphate salvage; pyridoxal 5'-phosphate from pyridoxine 5'-phosphate: step 1/1. Catalyzes the oxidation of either pyridoxine 5'-phosphate (PNP) or pyridoxamine 5'-phosphate (PMP) into pyridoxal 5'-phosphate (PLP). This Burkholderia orbicola (strain MC0-3) protein is Pyridoxine/pyridoxamine 5'-phosphate oxidase.